A 160-amino-acid polypeptide reads, in one-letter code: Large ribosomal subunit protein eL21 (160 aa).

Composition is skewed to basic and acidic residues over residues 112–123 and 136–145; these read NDQKKKEAKEKG and REAHFVRTNG. The segment at 112–145 is disordered; sequence NDQKKKEAKEKGTWVQLKRQPAPPREAHFVRTNG.

It belongs to the eukaryotic ribosomal protein eL21 family. As to quaternary structure, component of the large ribosomal subunit.

It localises to the cytoplasm. The protein resides in the cytosol. It is found in the endoplasmic reticulum. In terms of biological role, component of the large ribosomal subunit. The ribosome is a large ribonucleoprotein complex responsible for the synthesis of proteins in the cell. This chain is Large ribosomal subunit protein eL21 (RPL21), found in Oryctolagus cuniculus (Rabbit).